A 435-amino-acid chain; its full sequence is Adenylosuccinate synthetase (435 aa).

Residues 13–19 (GDEGKGK) and 41–43 (GHT) contribute to the GTP site. The Proton acceptor role is filled by Asp-14. Asp-14 and Gly-41 together coordinate Mg(2+). Residues 14 to 17 (DEGK), 39 to 42 (NAGH), Thr-130, Arg-144, Gln-225, Thr-240, and Arg-304 each bind IMP. Catalysis depends on His-42, which acts as the Proton donor. 300 to 306 (ATTGRPR) is a substrate binding site. GTP is bound by residues Arg-306, 332–334 (KLD), and 419–421 (STG).

This sequence belongs to the adenylosuccinate synthetase family. In terms of assembly, homodimer. Mg(2+) serves as cofactor.

The protein localises to the cytoplasm. The catalysed reaction is IMP + L-aspartate + GTP = N(6)-(1,2-dicarboxyethyl)-AMP + GDP + phosphate + 2 H(+). It participates in purine metabolism; AMP biosynthesis via de novo pathway; AMP from IMP: step 1/2. Its function is as follows. Plays an important role in the de novo pathway of purine nucleotide biosynthesis. Catalyzes the first committed step in the biosynthesis of AMP from IMP. In Nitrosospira multiformis (strain ATCC 25196 / NCIMB 11849 / C 71), this protein is Adenylosuccinate synthetase.